Here is a 110-residue protein sequence, read N- to C-terminus: UPF0060 membrane protein BPSL1340 (110 aa).

4 consecutive transmembrane segments (helical) span residues 9 to 29, 34 to 54, 64 to 84, and 86 to 106; these read ALFVLTAVAEIVGCYLPWLVL, PAWLLAPAALSLALFAWLLTL, AAYGGVYIAVALAWLRIVDGV, and LSRWDVAGAALALAGMSVIAL.

It belongs to the UPF0060 family.

It localises to the cell inner membrane. The protein is UPF0060 membrane protein BPSL1340 of Burkholderia pseudomallei (strain K96243).